The chain runs to 138 residues: Brain natriuretic peptide (138 aa).

Residues 1-22 (MRLSSMWLCSLLLILKLQLSST) form the signal peptide. Disordered regions lie at residues 50–84 (EQMA…AGLD) and 99–138 (SVRN…PKQR). The cysteines at positions 111 and 127 are disulfide-linked.

It belongs to the natriuretic peptide family.

Its subcellular location is the secreted. Functionally, cardiac hormone which may function as a paracrine antifibrotic factor in the heart. Also plays a key role in cardiovascular homeostasis through natriuresis, diuresis, vasorelaxation, and inhibition of renin and aldosterone secretion. This Oreochromis mossambicus (Mozambique tilapia) protein is Brain natriuretic peptide (nppb).